Consider the following 254-residue polypeptide: Phosphoglycerate mutase 1 (254 aa).

Substrate contacts are provided by residues 10-17 and 23-24; these read RHGESAWN and SG. The Tele-phosphohistidine intermediate role is filled by His-11. A phosphoserine mark is found at Ser-14 and Ser-23. Tyr-26 bears the Phosphotyrosine mark. Phosphoserine is present on Ser-31. Substrate contacts are provided by residues Arg-62, 89–92, and Lys-100; that span reads ERHY. The Proton donor/acceptor role is filled by Glu-89. Position 106 is an N6-acetyllysine (Lys-106). Residue 116–117 coordinates substrate; that stretch reads RR. Ser-118 is modified (phosphoserine). 187–188 contributes to the substrate binding site; sequence GN. Residue Lys-251 is modified to N6-acetyllysine; alternate. Lys-251 is subject to N6-succinyllysine; alternate. 2 positions are modified to N6-acetyllysine: Lys-253 and Lys-254.

It belongs to the phosphoglycerate mutase family. BPG-dependent PGAM subfamily. As to quaternary structure, homodimer. In terms of processing, acetylated at Lys-253, Lys-253 and Lys-254 under high glucose condition. Acetylation increases catalytic activity. Under glucose restriction SIRT1 levels dramatically increase and it deacetylates the enzyme. As to expression, expressed in the liver and brain. Not found in the muscle.

It catalyses the reaction (2R)-2-phosphoglycerate = (2R)-3-phosphoglycerate. It carries out the reaction (2R)-3-phospho-glyceroyl phosphate = (2R)-2,3-bisphosphoglycerate + H(+). In terms of biological role, catalyzes the interconversion of 2-phosphoglycerate and 3-phosphoglyceratea crucial step in glycolysis, by using 2,3-bisphosphoglycerate. Also catalyzes the interconversion of (2R)-2,3-bisphosphoglycerate and (2R)-3-phospho-glyceroyl phosphate. This chain is Phosphoglycerate mutase 1, found in Homo sapiens (Human).